A 493-amino-acid polypeptide reads, in one-letter code: Aspartate-semialdehyde dehydrogenase (Non-phosphorylating) (493 aa).

NADP(+) contacts are provided by residues 160 to 161 (WN), 184 to 187 (KPAH), and 237 to 238 (GS). Glu259 acts as the Proton acceptor in catalysis. NADP(+) is bound at residue Leu260. Cys293 functions as the Nucleophile in the catalytic mechanism. An NADP(+)-binding site is contributed by Glu390.

It belongs to the aldehyde dehydrogenase family.

Its subcellular location is the cytoplasm. It carries out the reaction L-aspartate 4-semialdehyde + NAD(+) + H2O = L-aspartate + NADH + 2 H(+). Its function is as follows. Involved in the degradation of ectoine, which allows H.elongata to utilize ectoine as both a carbon and a nitrogen source for growth. Probably catalyzes the NAD(+)-dependent oxidation of L-aspartate-semialdehyde to L-aspartate. This chain is Aspartate-semialdehyde dehydrogenase (Non-phosphorylating), found in Halomonas elongata (strain ATCC 33173 / DSM 2581 / NBRC 15536 / NCIMB 2198 / 1H9).